The chain runs to 372 residues: Glutamate 5-kinase (372 aa).

An ATP-binding site is contributed by Lys-14. Residues Ser-54, Asp-141, and Asn-153 each contribute to the substrate site. Residue 173-174 coordinates ATP; it reads TD. The PUA domain maps to 280–358; the sequence is RGTLVLDDGA…EAIVRELGYM (79 aa).

It belongs to the glutamate 5-kinase family.

It is found in the cytoplasm. The enzyme catalyses L-glutamate + ATP = L-glutamyl 5-phosphate + ADP. Its pathway is amino-acid biosynthesis; L-proline biosynthesis; L-glutamate 5-semialdehyde from L-glutamate: step 1/2. Catalyzes the transfer of a phosphate group to glutamate to form L-glutamate 5-phosphate. This is Glutamate 5-kinase from Pseudomonas syringae pv. tomato (strain ATCC BAA-871 / DC3000).